Consider the following 429-residue polypeptide: Tol-Pal system protein TolB (429 aa).

The N-terminal stretch at 1 to 22 is a signal peptide; sequence MTRRLFILITIMLCLIPALLHS. Disordered regions lie at residues 362 to 383 and 407 to 429; these read PDGTNDTRLTSEGSNEHPRWSP and GSGQTRVSGGKGRDSHPTWSPRW. A compositionally biased stretch (polar residues) spans 363–374; the sequence is DGTNDTRLTSEG.

This sequence belongs to the TolB family. As to quaternary structure, the Tol-Pal system is composed of five core proteins: the inner membrane proteins TolA, TolQ and TolR, the periplasmic protein TolB and the outer membrane protein Pal. They form a network linking the inner and outer membranes and the peptidoglycan layer.

The protein localises to the periplasm. Functionally, part of the Tol-Pal system, which plays a role in outer membrane invagination during cell division and is important for maintaining outer membrane integrity. In Geobacter metallireducens (strain ATCC 53774 / DSM 7210 / GS-15), this protein is Tol-Pal system protein TolB.